The sequence spans 266 residues: Undecaprenyl-diphosphatase 1 (266 aa).

8 helical membrane passes run methionine 1 to isoleucine 21, glutamine 39 to phenylalanine 59, tryptophan 87 to isoleucine 107, threonine 114 to methionine 134, alanine 149 to alanine 169, alanine 183 to valine 203, alanine 218 to leucine 238, and methionine 246 to leucine 266.

It belongs to the UppP family.

It is found in the cell inner membrane. The catalysed reaction is di-trans,octa-cis-undecaprenyl diphosphate + H2O = di-trans,octa-cis-undecaprenyl phosphate + phosphate + H(+). Catalyzes the dephosphorylation of undecaprenyl diphosphate (UPP). Confers resistance to bacitracin. This is Undecaprenyl-diphosphatase 1 from Shewanella oneidensis (strain ATCC 700550 / JCM 31522 / CIP 106686 / LMG 19005 / NCIMB 14063 / MR-1).